The chain runs to 1025 residues: DNA ligase 4 (1025 aa).

The disordered stretch occupies residues 1–36; the sequence is MMQPTPAPSSAPGSPQRTQAEPEMETPSYPQPPQNV. Residues Glu289, Lys291, Leu292, Arg296, Glu349, Phe387, Glu447, Lys452, Lys469, and Lys471 each coordinate ATP. Lys291 serves as the catalytic N6-AMP-lysine intermediate. Glu349 contacts Mg(2+). Glu447 contributes to the Mg(2+) binding site. The BRCT 1 domain maps to 667 to 763; the sequence is VKTDIFNGMK…EPAPFKKKYF (97 aa). A disordered region spans residues 773 to 904; the sequence is ADEYNEDDGE…TTPDVDGDVK (132 aa). 2 stretches are compositionally biased toward acidic residues: residues 775–785 and 806–816; these read EYNEDDGEEEG and SETEDEDEEQA. The span at 817–838 shows a compositional bias: basic and acidic residues; sequence PEIKEEQDGELHEWLKVDDRKS. The span at 845 to 870 shows a compositional bias: acidic residues; the sequence is DEEDSVTEDDSDNADVADEEEPDLDD. The span at 891 to 904 shows a compositional bias: basic and acidic residues; it reads RHRETTPDVDGDVK. The 111-residue stretch at 915 to 1025 folds into the BRCT 2 domain; that stretch reads DPDVIFKHLC…TLLDEEEFAP (111 aa).

This sequence belongs to the ATP-dependent DNA ligase family. It depends on Mg(2+) as a cofactor.

The protein resides in the nucleus. It carries out the reaction ATP + (deoxyribonucleotide)n-3'-hydroxyl + 5'-phospho-(deoxyribonucleotide)m = (deoxyribonucleotide)n+m + AMP + diphosphate.. In terms of biological role, DNA ligase involved in DNA non-homologous end joining (NHEJ); required for double-strand break (DSB) repair. This is DNA ligase 4 (LIG4) from Coprinopsis cinerea (Inky cap fungus).